The sequence spans 368 residues: MNPMLTNNSQPSNYTAGNAKGKIKKLRSACDACHASKVRCSGEPICARCQRDNVACHYSYRAHQGKPKGSLNRKTIERMKAAGFIEQRQRPAASQPPGHGTSRDSSVCASGTTTDNLLNFIEIQPPGESNESPVAIHATPSPCFAMTGGLLPDFDAANLDAFLEAYQTPEDSCLRAVEEFPGASPADMDCIFIGTPSSMSRDYTEVATCRCVREITQQINNVHAASADRSTTGLDDVLHYTREISACISGLLQCYSCGGQVQVFVLASVVLSLLMELMHPLLDSSTDTSRPRAQIRVGNYDMSGQLGDVLEKVIVRSIITKLRQVVDKFEMKADFLRSETAQAEFLKSEARRLKRGFGRIEEGTATLP.

The segment at residues 30–56 (CDACHASKVRCSGEPICARCQRDNVAC) is a DNA-binding region (zn(2)-C6 fungal-type). Residues 84 to 109 (FIEQRQRPAASQPPGHGTSRDSSVCA) form a disordered region.

Its subcellular location is the nucleus. Transcription factor that specifically regulates the thioclapurine biosynthesis gene cluster. This is C6 finger domain transcription factor tcpZ from Claviceps purpurea (strain 20.1) (Ergot fungus).